Reading from the N-terminus, the 156-residue chain is Small ribosomal subunit protein uS7 (156 aa).

This sequence belongs to the universal ribosomal protein uS7 family. As to quaternary structure, part of the 30S ribosomal subunit. Contacts proteins S9 and S11.

One of the primary rRNA binding proteins, it binds directly to 16S rRNA where it nucleates assembly of the head domain of the 30S subunit. Is located at the subunit interface close to the decoding center, probably blocks exit of the E-site tRNA. The sequence is that of Small ribosomal subunit protein uS7 from Agrobacterium fabrum (strain C58 / ATCC 33970) (Agrobacterium tumefaciens (strain C58)).